The chain runs to 238 residues: Phosphoribosylaminoimidazole-succinocarboxamide synthase (238 aa).

Belongs to the SAICAR synthetase family.

It carries out the reaction 5-amino-1-(5-phospho-D-ribosyl)imidazole-4-carboxylate + L-aspartate + ATP = (2S)-2-[5-amino-1-(5-phospho-beta-D-ribosyl)imidazole-4-carboxamido]succinate + ADP + phosphate + 2 H(+). It functions in the pathway purine metabolism; IMP biosynthesis via de novo pathway; 5-amino-1-(5-phospho-D-ribosyl)imidazole-4-carboxamide from 5-amino-1-(5-phospho-D-ribosyl)imidazole-4-carboxylate: step 1/2. The protein is Phosphoribosylaminoimidazole-succinocarboxamide synthase of Chlorobium phaeovibrioides (strain DSM 265 / 1930) (Prosthecochloris vibrioformis (strain DSM 265)).